The chain runs to 452 residues: Exodeoxyribonuclease 7 large subunit (452 aa).

This sequence belongs to the XseA family. In terms of assembly, heterooligomer composed of large and small subunits.

It localises to the cytoplasm. The catalysed reaction is Exonucleolytic cleavage in either 5'- to 3'- or 3'- to 5'-direction to yield nucleoside 5'-phosphates.. In terms of biological role, bidirectionally degrades single-stranded DNA into large acid-insoluble oligonucleotides, which are then degraded further into small acid-soluble oligonucleotides. This Bacillus cereus (strain ATCC 10987 / NRS 248) protein is Exodeoxyribonuclease 7 large subunit.